A 455-amino-acid chain; its full sequence is Retinoic acid receptor beta (455 aa).

Residues 1–87 (MTTSSRTCPV…PLPPPRVYKP (87 aa)) form a modulating region. Residues 45-78 (QSHPPTSGCSTPSPASVETQSTSSEELVPSPPSP) form a disordered region. Polar residues predominate over residues 47-66 (HPPTSGCSTPSPASVETQST). 2 NR C4-type zinc fingers span residues 88-108 (CFVCQDKSSGYHYGVSACEGC) and 124-148 (CHRDKNCVINKVTRNRCQYCRLQKC). The nuclear receptor DNA-binding region spans 88 to 153 (CFVCQDKSSG…RLQKCFEVGM (66 aa)). The segment at 154 to 182 (SKESVRNDRNKKKKEPTKQESTENYEMTA) is hinge. The region spanning 183-417 (ELDDLTEKIR…PLIQEMLENS (235 aa)) is the NR LBD domain. The interval 416–455 (NSEGHEPLTPTSNGNTAEHSPSISPSSVDNSSVSQSPMVQ) is disordered. Over residues 424–434 (TPTSNGNTAEH) the composition is skewed to polar residues. Positions 435 to 455 (SPSISPSSVDNSSVSQSPMVQ) are enriched in low complexity.

The protein belongs to the nuclear hormone receptor family. NR1 subfamily. In terms of assembly, heterodimer; with a RXR molecule. Binds DNA preferentially as a RAR/RXR heterodimer. Both isoforms expressed in heart, lung, kidney, liver, brain, lung and testis. Isoform Beta-1 is highly expressed in testes and brain. Levels increase during testes maturation. Isoform beta-2 is predominant in heart, kidney and lung.

It localises to the nucleus. Its function is as follows. Receptor for retinoic acid. Retinoic acid receptors bind as heterodimers to their target response elements in response to their ligands, all-trans or 9-cis retinoic acid, and regulate gene expression in various biological processes. The RAR/RXR heterodimers bind to the retinoic acid response elements (RARE) composed of tandem 5'-AGGTCA-3' sites known as DR1-DR5. May be required for Sertoli cell differentiation and spermatogenesis. This chain is Retinoic acid receptor beta (RARB), found in Coturnix japonica (Japanese quail).